We begin with the raw amino-acid sequence, 223 residues long: Endonuclease NucS (223 aa).

It belongs to the NucS endonuclease family.

The protein localises to the cytoplasm. In terms of biological role, cleaves both 3' and 5' ssDNA extremities of branched DNA structures. The chain is Endonuclease NucS from Mycolicibacterium vanbaalenii (strain DSM 7251 / JCM 13017 / BCRC 16820 / KCTC 9966 / NRRL B-24157 / PYR-1) (Mycobacterium vanbaalenii).